A 183-amino-acid chain; its full sequence is MGIDINHKHDRKVRRTEVKSQDVYLRLLVKLYRYLARRTNSKFNTIILRRLFMSRINRPPLSLSRLARHMKKPTREGMIAVVVGTITNDVRLYKVPKMSVAALHVTEKARARILAAGGEILTFDQLALRAPTGAKTVLLQGRRNAREAVRHFGPAPGAPRSHTKPYVRTKGHERARPRRRSNV.

Residues 150–183 (RHFGPAPGAPRSHTKPYVRTKGHERARPRRRSNV) are disordered. Basic residues predominate over residues 161–183 (SHTKPYVRTKGHERARPRRRSNV).

Belongs to the eukaryotic ribosomal protein eL18 family.

It localises to the cytoplasm. The protein is Large ribosomal subunit protein eL18 (RpL18) of Spodoptera frugiperda (Fall armyworm).